The sequence spans 233 residues: Orotidine 5'-phosphate decarboxylase (233 aa).

Residues Asp10, Lys32, 60–69, Thr115, Arg176, Gln185, Gly205, and Arg206 contribute to the substrate site; that span reads DLKLHDIPAT. Lys62 functions as the Proton donor in the catalytic mechanism.

Belongs to the OMP decarboxylase family. Type 1 subfamily. In terms of assembly, homodimer.

It carries out the reaction orotidine 5'-phosphate + H(+) = UMP + CO2. Its pathway is pyrimidine metabolism; UMP biosynthesis via de novo pathway; UMP from orotate: step 2/2. Functionally, catalyzes the decarboxylation of orotidine 5'-monophosphate (OMP) to uridine 5'-monophosphate (UMP). In Thermobifida fusca (strain YX), this protein is Orotidine 5'-phosphate decarboxylase.